The chain runs to 128 residues: Small ribosomal subunit protein eS6 (128 aa).

The protein belongs to the eukaryotic ribosomal protein eS6 family.

The protein is Small ribosomal subunit protein eS6 of Methanobrevibacter smithii (strain ATCC 35061 / DSM 861 / OCM 144 / PS).